The following is a 637-amino-acid chain: 1-deoxy-D-xylulose-5-phosphate synthase (637 aa).

Thiamine diphosphate is bound by residues His-71 and 112-114 (SHA). Position 144 (Asp-144) interacts with Mg(2+). Thiamine diphosphate contacts are provided by residues 145 to 146 (GA), Asn-173, Tyr-284, and Glu-365. Mg(2+) is bound at residue Asn-173.

This sequence belongs to the transketolase family. DXPS subfamily. In terms of assembly, homodimer. It depends on Mg(2+) as a cofactor. Thiamine diphosphate serves as cofactor.

The catalysed reaction is D-glyceraldehyde 3-phosphate + pyruvate + H(+) = 1-deoxy-D-xylulose 5-phosphate + CO2. Its pathway is metabolic intermediate biosynthesis; 1-deoxy-D-xylulose 5-phosphate biosynthesis; 1-deoxy-D-xylulose 5-phosphate from D-glyceraldehyde 3-phosphate and pyruvate: step 1/1. Functionally, catalyzes the acyloin condensation reaction between C atoms 2 and 3 of pyruvate and glyceraldehyde 3-phosphate to yield 1-deoxy-D-xylulose-5-phosphate (DXP). The sequence is that of 1-deoxy-D-xylulose-5-phosphate synthase from Mycolicibacterium vanbaalenii (strain DSM 7251 / JCM 13017 / BCRC 16820 / KCTC 9966 / NRRL B-24157 / PYR-1) (Mycobacterium vanbaalenii).